The sequence spans 245 residues: Peroxisome biogenesis protein 19-2 (245 aa).

The disordered stretch occupies residues Ala17 to Ser106. Basic and acidic residues-rich tracts occupy residues Val33–Glu44 and Ala71–Lys92. Positions Ser96 to Gly105 are enriched in polar residues. Cys242 carries the post-translational modification Cysteine methyl ester. Cys242 is lipidated: S-farnesyl cysteine. Positions Cys243–Met245 are cleaved as a propeptide — removed in mature form.

Belongs to the peroxin-19 family. In terms of assembly, dimer. Interacts with PEX10 (via C-terminus). May be farnesylated. As to expression, expressed in roots, leaves, flowers, siliques and stems. Highest expression in roots and leaves.

The protein resides in the cytoplasm. The protein localises to the peroxisome membrane. Functionally, contributes to morphology determination of peroxisomes, but not to import of peroxisomal matrix proteins. Required for proper post-translational import and stabilization of peroxisomal membrane proteins (PMPs). Acts as a cytosolic import receptor for PMPs and delivers them to the docking factor PEX3 at the peroxisomal membrane for subsequent insertion into the membrane. Acts as a chaperone in stabilizing or maintaining PMPs in the lipid bilayer. The chain is Peroxisome biogenesis protein 19-2 (PEX19-2) from Arabidopsis thaliana (Mouse-ear cress).